The chain runs to 90 residues: uncharacterized protein (90 aa).

This is an uncharacterized protein from Saccharolobus islandicus (Sulfolobus islandicus).